The primary structure comprises 470 residues: Acetyl-CoA decarbonylase/synthase complex subunit beta 2 (470 aa).

Residues C189, C192, C278, and C280 each coordinate [Ni-Fe-S] cluster.

Belongs to the CdhC family. Monomer. The ACDS complex is made up of alpha, epsilon, beta, gamma and delta chains with a probable stoichiometry of (alpha(2)epsilon(2))(4)-beta(8)-(gamma(1)delta(1))(8) (Potential). The cofactor is [Ni-Fe-S] cluster.

The enzyme catalyses Co(I)-[corrinoid Fe-S protein] + acetyl-CoA + H(+) = methyl-Co(III)-[corrinoid Fe-S protein] + CO + CoA. The protein operates within one-carbon metabolism; methanogenesis from acetate. In terms of biological role, part of a complex that catalyzes the reversible cleavage of acetyl-CoA, allowing growth on acetate as sole source of carbon and energy. The alpha-epsilon complex generates CO from CO(2), while the beta subunit (this protein) combines the CO with CoA and a methyl group to form acetyl-CoA. The methyl group, which is incorporated into acetyl-CoA, is transferred to the beta subunit by a corrinoid iron-sulfur protein (the gamma-delta complex). This chain is Acetyl-CoA decarbonylase/synthase complex subunit beta 2 (cdhC2), found in Methanosarcina acetivorans (strain ATCC 35395 / DSM 2834 / JCM 12185 / C2A).